The primary structure comprises 296 residues: AUGMIN subunit 2 (296 aa).

Coiled coils occupy residues 56–83 and 253–285; these read DDLI…QGRK and AVHK…NRRL. Residues 218–296 are disordered; it reads AVSLPTTPGG…WPPSVKKSSV (79 aa). The span at 264 to 277 shows a compositional bias: acidic residues; that stretch reads QNEEEEEEEEEEDG.

Belongs to the HAUS2 family. In terms of assembly, part of the augmin complex composed of 8 subunits. The complex acts on microtubules and interacts with gamma-tubulin in spindles and the phragmoplast.

Contributes to the assembly of the acentrosomal spindle and phragmoplast microtubule arrays as part of the augmin complex. The chain is AUGMIN subunit 2 from Arabidopsis thaliana (Mouse-ear cress).